The primary structure comprises 422 residues: Phosphoribosylamine--glycine ligase (422 aa).

The region spanning 107 to 313 (KDLMKKYDIP…LVQVLLDLLD (207 aa)) is the ATP-grasp domain. Residue 133–194 (VQEKGAPIVI…EEYLSGEEFS (62 aa)) participates in ATP binding. Mg(2+) contacts are provided by E283 and N285.

Belongs to the GARS family. The cofactor is Mg(2+). Mn(2+) is required as a cofactor.

It catalyses the reaction 5-phospho-beta-D-ribosylamine + glycine + ATP = N(1)-(5-phospho-beta-D-ribosyl)glycinamide + ADP + phosphate + H(+). It functions in the pathway purine metabolism; IMP biosynthesis via de novo pathway; N(1)-(5-phospho-D-ribosyl)glycinamide from 5-phospho-alpha-D-ribose 1-diphosphate: step 2/2. The polypeptide is Phosphoribosylamine--glycine ligase (Bacillus subtilis (strain 168)).